The sequence spans 356 residues: S-adenosylmethionine:tRNA ribosyltransferase-isomerase (356 aa).

Belongs to the QueA family. As to quaternary structure, monomer.

The protein resides in the cytoplasm. The catalysed reaction is 7-aminomethyl-7-carbaguanosine(34) in tRNA + S-adenosyl-L-methionine = epoxyqueuosine(34) in tRNA + adenine + L-methionine + 2 H(+). It participates in tRNA modification; tRNA-queuosine biosynthesis. Functionally, transfers and isomerizes the ribose moiety from AdoMet to the 7-aminomethyl group of 7-deazaguanine (preQ1-tRNA) to give epoxyqueuosine (oQ-tRNA). The protein is S-adenosylmethionine:tRNA ribosyltransferase-isomerase of Xanthomonas campestris pv. campestris (strain 8004).